The sequence spans 556 residues: 2-succinyl-5-enolpyruvyl-6-hydroxy-3-cyclohexene-1-carboxylate synthase (556 aa).

Belongs to the TPP enzyme family. MenD subfamily. Homodimer. The cofactor is Mg(2+). Mn(2+) is required as a cofactor. Thiamine diphosphate serves as cofactor.

The enzyme catalyses isochorismate + 2-oxoglutarate + H(+) = 5-enolpyruvoyl-6-hydroxy-2-succinyl-cyclohex-3-ene-1-carboxylate + CO2. Its pathway is quinol/quinone metabolism; 1,4-dihydroxy-2-naphthoate biosynthesis; 1,4-dihydroxy-2-naphthoate from chorismate: step 2/7. It participates in quinol/quinone metabolism; menaquinone biosynthesis. Its function is as follows. Catalyzes the thiamine diphosphate-dependent decarboxylation of 2-oxoglutarate and the subsequent addition of the resulting succinic semialdehyde-thiamine pyrophosphate anion to isochorismate to yield 2-succinyl-5-enolpyruvyl-6-hydroxy-3-cyclohexene-1-carboxylate (SEPHCHC). The polypeptide is 2-succinyl-5-enolpyruvyl-6-hydroxy-3-cyclohexene-1-carboxylate synthase (Salmonella typhimurium (strain LT2 / SGSC1412 / ATCC 700720)).